The following is a 361-amino-acid chain: D-malate dehydrogenase [decarboxylating] (361 aa).

Mn(2+) is bound by residues Asp224, Asp248, and Asp252.

The protein belongs to the isocitrate and isopropylmalate dehydrogenases family. It depends on Mg(2+) as a cofactor. Requires Mn(2+) as cofactor.

The protein resides in the cytoplasm. It carries out the reaction (R)-malate + NAD(+) = pyruvate + CO2 + NADH. Catalyzes the NAD(+)-dependent oxidative decarboxylation of D-malate into pyruvate. Is essential for aerobic growth on D-malate as the sole carbon source. But is not required for anaerobic D-malate utilization, although DmlA is expressed and active in those conditions. Appears to be not able to use L-tartrate as a substrate for dehydrogenation instead of D-malate. The protein is D-malate dehydrogenase [decarboxylating] (dmlA) of Escherichia coli (strain K12).